The chain runs to 197 residues: Recombination protein RecR (197 aa).

Residues 56–71 (CKRCGSYAETEICNIC) form a C4-type zinc finger. The region spanning 79-174 (HTFCVVEQPE…DVTRIAYGIT (96 aa)) is the Toprim domain.

This sequence belongs to the RecR family.

Its function is as follows. May play a role in DNA repair. It seems to be involved in an RecBC-independent recombinational process of DNA repair. It may act with RecF and RecO. The polypeptide is Recombination protein RecR (Leptospira borgpetersenii serovar Hardjo-bovis (strain JB197)).